We begin with the raw amino-acid sequence, 342 residues long: Probable alcohol acetyltransferase (342 aa).

The transit peptide at 1–38 directs the protein to the mitochondrion; sequence MMILGKAGILAQYGTIYVRQNTIRNNLSSCIFKQSLCA. Positions 39–46 are cleaved as a propeptide — removed in mature form; that stretch reads FHSLAKVL. Residues 75–326 enclose the AB hydrolase-1 domain; it reads PPIIILHGLF…AGHWVNAEKP (252 aa). Catalysis depends on charge relay system residues serine 152 and histidine 319.

Belongs to the AB hydrolase superfamily. Post-translationally, processed by both the mitochondrial processing peptidase (MPP) and the mitochondrial octapeptidyl aminopeptidase (OCT1).

It localises to the mitochondrion. Probable alcohol acetyltransferase that uses acetyl-CoA to synthesize acetate esters from various alcohols. Not involved in the synthesis of ethyl acetate. This Saccharomyces cerevisiae (strain ATCC 204508 / S288c) (Baker's yeast) protein is Probable alcohol acetyltransferase (IMO32).